A 150-amino-acid chain; its full sequence is Protein Turandot X1/X2 (150 aa).

The signal sequence occupies residues Met1–Ala22. Residues Arg127–Lys150 are disordered. Polar residues predominate over residues Ser132–Lys150.

Belongs to the Turandot family.

The protein localises to the secreted. Functionally, a humoral factor that may play a role in stress tolerance. This chain is Protein Turandot X1/X2, found in Drosophila sechellia (Fruit fly).